The sequence spans 259 residues: MLMVIDIGNTNVVVGLFAGHELRARWRLATARDRMPDEWWVQLNVLSQSAGFSLGEVVGIAISSVVPSLTATFQELAQRYLLVEPLIVNGAQDYGLPVRVEHPAEVGADRICNAIAAVERYGAPVIVVDFGTGTTFDVIDADGAYIGGAIAPGITIAFEALTQRAARLYTVALQAPPRAIGRNTRESLQSGTVLGYAELVRGLIRRIRSELGHEAPAIATGGLATLIAPLVPEFSAVEADLTLYGLRSAYERMHRSLGA.

ATP is bound at residue 6 to 13 (DIGNTNVV). 107 to 110 (GADR) is a substrate binding site. The Proton acceptor role is filled by Asp-109. Asp-129 serves as a coordination point for K(+). Thr-132 provides a ligand contact to ATP. Residue Thr-184 coordinates substrate.

This sequence belongs to the type III pantothenate kinase family. Homodimer. Requires NH4(+) as cofactor. K(+) serves as cofactor.

It is found in the cytoplasm. The catalysed reaction is (R)-pantothenate + ATP = (R)-4'-phosphopantothenate + ADP + H(+). It functions in the pathway cofactor biosynthesis; coenzyme A biosynthesis; CoA from (R)-pantothenate: step 1/5. In terms of biological role, catalyzes the phosphorylation of pantothenate (Pan), the first step in CoA biosynthesis. The chain is Type III pantothenate kinase from Thermomicrobium roseum (strain ATCC 27502 / DSM 5159 / P-2).